The sequence spans 208 residues: Protein-L-isoaspartate O-methyltransferase (208 aa).

The active site involves serine 59.

Belongs to the methyltransferase superfamily. L-isoaspartyl/D-aspartyl protein methyltransferase family.

The protein resides in the cytoplasm. The enzyme catalyses [protein]-L-isoaspartate + S-adenosyl-L-methionine = [protein]-L-isoaspartate alpha-methyl ester + S-adenosyl-L-homocysteine. Catalyzes the methyl esterification of L-isoaspartyl residues in peptides and proteins that result from spontaneous decomposition of normal L-aspartyl and L-asparaginyl residues. It plays a role in the repair and/or degradation of damaged proteins. The polypeptide is Protein-L-isoaspartate O-methyltransferase (Vibrio atlanticus (strain LGP32) (Vibrio splendidus (strain Mel32))).